The following is a 283-amino-acid chain: Ribose-phosphate pyrophosphokinase (283 aa).

Residues 34 to 36 (DGE) and 89 to 90 (RQ) each bind ATP. Positions 120 and 159 each coordinate Mg(2+). Residue Lys-182 is part of the active site. Arg-184 and Asp-208 together coordinate D-ribose 5-phosphate.

The protein belongs to the ribose-phosphate pyrophosphokinase family. Class III (archaeal) subfamily. Requires Mg(2+) as cofactor.

It is found in the cytoplasm. It catalyses the reaction D-ribose 5-phosphate + ATP = 5-phospho-alpha-D-ribose 1-diphosphate + AMP + H(+). It functions in the pathway metabolic intermediate biosynthesis; 5-phospho-alpha-D-ribose 1-diphosphate biosynthesis; 5-phospho-alpha-D-ribose 1-diphosphate from D-ribose 5-phosphate (route I): step 1/1. Functionally, involved in the biosynthesis of the central metabolite phospho-alpha-D-ribosyl-1-pyrophosphate (PRPP) via the transfer of pyrophosphoryl group from ATP to 1-hydroxyl of ribose-5-phosphate (Rib-5-P). In Methanosarcina acetivorans (strain ATCC 35395 / DSM 2834 / JCM 12185 / C2A), this protein is Ribose-phosphate pyrophosphokinase.